Here is a 254-residue protein sequence, read N- to C-terminus: uncharacterized protein (254 aa).

This sequence belongs to the nucleoside-specific channel-forming outer membrane porin (Tsx) (TC 1.B.10) family.

This is an uncharacterized protein from Escherichia coli (strain K12).